Consider the following 378-residue polypeptide: Probable protein phosphatase 2C 55 (378 aa).

2 disordered regions span residues 1–59 and 79–115; these read MRRH…ASKG and EGEASSRGPAASRGGRRGRNSKRQPPRSRFDGDGVGC. The segment covering 7 to 26 has biased composition (low complexity); sequence LGLLRRAAASSTSAASSRAG. Over residues 92 to 104 the composition is skewed to basic residues; it reads GGRRGRNSKRQPP. The region spanning 122–369 is the PPM-type phosphatase domain; sequence SWGYSSFQGR…DNVTCIVLQF (248 aa). Positions 158, 159, 321, and 360 each coordinate Mn(2+).

Belongs to the PP2C family. The cofactor is Mg(2+). Requires Mn(2+) as cofactor.

The catalysed reaction is O-phospho-L-seryl-[protein] + H2O = L-seryl-[protein] + phosphate. It carries out the reaction O-phospho-L-threonyl-[protein] + H2O = L-threonyl-[protein] + phosphate. This Oryza sativa subsp. japonica (Rice) protein is Probable protein phosphatase 2C 55.